Here is a 956-residue protein sequence, read N- to C-terminus: Valine--tRNA ligase (956 aa).

The 'HIGH' region signature appears at 43–53 (PNITGNLHIGH). The 'KMSKS' region motif lies at 556–560 (KMSKS). Lys-559 is a binding site for ATP. A coiled-coil region spans residues 889–920 (PKEKELKNLNKEISKIQLAINKLQQRLSNEEF).

Belongs to the class-I aminoacyl-tRNA synthetase family. ValS type 1 subfamily. In terms of assembly, monomer.

It localises to the cytoplasm. The enzyme catalyses tRNA(Val) + L-valine + ATP = L-valyl-tRNA(Val) + AMP + diphosphate. Functionally, catalyzes the attachment of valine to tRNA(Val). As ValRS can inadvertently accommodate and process structurally similar amino acids such as threonine, to avoid such errors, it has a 'posttransfer' editing activity that hydrolyzes mischarged Thr-tRNA(Val) in a tRNA-dependent manner. The polypeptide is Valine--tRNA ligase (Buchnera aphidicola subsp. Baizongia pistaciae (strain Bp)).